The chain runs to 434 residues: Nuclear receptor subfamily 1 group I member 2 (434 aa).

Residues 38–107 constitute a DNA-binding region (nuclear receptor); the sequence is PQICRVCGDK…RLRKCLESGM (70 aa). 2 NR C4-type zinc fingers span residues 41–61 and 77–102; these read CRVC…CEGC and CPFR…LRKC. A Bipartite nuclear localization signal motif is present at residues 66-92; sequence RRAMKRNARLRCPFRKGACEITRKTRR. The hinge stretch occupies residues 108 to 145; that stretch reads KKEMIMSDEAVEERRALIKRKKSERTGTQPLGVQGLTE. Residues 146 to 433 enclose the NR LBD domain; it reads EQRMMIRELM…LMQELFGITG (288 aa). Residues serine 247, 285–288, and histidine 407 contribute to the hyperforin site; that span reads QLRF.

The protein belongs to the nuclear hormone receptor family. NR1 subfamily. Heterodimer with RXR. Interacts with NCOA1. Interacts (via domain NR LBD) with CRY1 and CRY2 in a ligand-dependent manner. Expressed in liver, colon and small intestine.

The protein resides in the nucleus. Functionally, nuclear receptor that binds and is activated by variety of endogenous and xenobiotic compounds. Transcription factor that activates the transcription of multiple genes involved in the metabolism and secretion of potentially harmful xenobiotics, drugs and endogenous compounds. Activated by the antibiotic rifampicin and various plant metabolites, such as hyperforin, guggulipid, colupulone, and isoflavones. Response to specific ligands is species-specific. Activated by naturally occurring steroids, such as pregnenolone and progesterone. Binds to a response element in the promoters of the CYP3A4 and ABCB1/MDR1 genes. This is Nuclear receptor subfamily 1 group I member 2 (NR1I2) from Homo sapiens (Human).